We begin with the raw amino-acid sequence, 344 residues long: MTADISLRPADHPAVRFGKVGVLLVNLGTPDGTDYTSMRRYLREFLTDRRVIEWSPWKWYPILFGIVLNTRPQKVGKAYELIWNKEQNESYLRTYTRNQSELMAGRLKDLDNVKVDWAMRYGTPSIGSRIDALKEEGCDRIVLFPLYPQYAAATTATVNDKAFQKLLSMRWQPALRTVPAYHDDETYIEALAASVERHLSTLDWKPEMLLASFHGIPMSYFKQGDPYYCQCQKTGRLLRERLGLTKENFLVTFQSRFGPEEWLQPYTDKTVEKLAKDGVKRIAVINPGFVSDCLETLEEIAEQAAHSFHENGGEKFAHIPCLNDGEDGMKVLEKVVRRELQGWV.

The Fe cation site is built by H214 and E295.

The protein belongs to the ferrochelatase family.

It is found in the cytoplasm. It catalyses the reaction heme b + 2 H(+) = protoporphyrin IX + Fe(2+). It participates in porphyrin-containing compound metabolism; protoheme biosynthesis; protoheme from protoporphyrin-IX: step 1/1. Catalyzes the ferrous insertion into protoporphyrin IX. This Rhizobium johnstonii (strain DSM 114642 / LMG 32736 / 3841) (Rhizobium leguminosarum bv. viciae) protein is Ferrochelatase.